Consider the following 407-residue polypeptide: Serine/threonine transporter SstT (407 aa).

9 consecutive transmembrane segments (helical) span residues 12–32 (GNLI…GISS), 42–62 (LGIL…FILI), 81–101 (IIIL…LANF), 141–161 (ALSS…GIAL), 179–199 (VLKI…GLVA), 218–238 (ILLV…IVFF), 245–267 (FPLI…SSAA), 288–308 (ISIP…IAIL), and 330–350 (IIAT…LLLI).

This sequence belongs to the dicarboxylate/amino acid:cation symporter (DAACS) (TC 2.A.23) family.

The protein resides in the cell inner membrane. It catalyses the reaction L-serine(in) + Na(+)(in) = L-serine(out) + Na(+)(out). The enzyme catalyses L-threonine(in) + Na(+)(in) = L-threonine(out) + Na(+)(out). Involved in the import of serine and threonine into the cell, with the concomitant import of sodium (symport system). The polypeptide is Serine/threonine transporter SstT (Campylobacter jejuni subsp. jejuni serotype O:23/36 (strain 81-176)).